A 530-amino-acid polypeptide reads, in one-letter code: Chondroitin sulfate N-acetylgalactosaminyltransferase 1 (530 aa).

The Cytoplasmic segment spans residues Met1–Arg12. Residues Val13–Thr33 form a helical; Signal-anchor for type II membrane protein membrane-spanning segment. Over Pro34–Thr530 the chain is Lumenal. The stretch at Ala57 to Ser93 forms a coiled coil. Residues Ser88–Gly107 are disordered. Over residues Phe91 to Arg105 the composition is skewed to polar residues. N-linked (GlcNAc...) asparagine glycosylation is found at Asn313 and Asn322. Asp358 and His475 together coordinate a divalent metal cation.

The protein belongs to the chondroitin N-acetylgalactosaminyltransferase family.

It localises to the golgi apparatus. The protein resides in the golgi stack membrane. It catalyses the reaction 3-O-(beta-D-GlcA-(1-&gt;3)-beta-D-Gal-(1-&gt;3)-beta-D-Gal-(1-&gt;4)-beta-D-Xyl)-L-seryl-[protein] + UDP-N-acetyl-alpha-D-galactosamine = 3-O-(beta-D-GalNAc-(1-&gt;4)-beta-D-GlcA-(1-&gt;3)-beta-D-Gal-(1-&gt;3)-beta-D-Gal-(1-&gt;4)-beta-D-Xyl)-L-seryl-[protein] + UDP + H(+). Transfers 1,4-N-acetylgalactosamine (GalNAc) from UDP-GalNAc to the non-reducing end of glucuronic acid (GlcUA). Required for addition of the first GalNAc to the core tetrasaccharide linker and for elongation of chondroitin chains. Important role in chondroitin chain biosynthesis in cartilage formation, and subsequent endochondral ossification. Moreover, is involved in the metabolism of aggrecan. The polypeptide is Chondroitin sulfate N-acetylgalactosaminyltransferase 1 (Mus musculus (Mouse)).